The sequence spans 206 residues: Imidazoleglycerol-phosphate dehydratase (206 aa).

It belongs to the imidazoleglycerol-phosphate dehydratase family.

It is found in the cytoplasm. It carries out the reaction D-erythro-1-(imidazol-4-yl)glycerol 3-phosphate = 3-(imidazol-4-yl)-2-oxopropyl phosphate + H2O. Its pathway is amino-acid biosynthesis; L-histidine biosynthesis; L-histidine from 5-phospho-alpha-D-ribose 1-diphosphate: step 6/9. This is Imidazoleglycerol-phosphate dehydratase from Mycolicibacterium smegmatis (strain ATCC 700084 / mc(2)155) (Mycobacterium smegmatis).